Reading from the N-terminus, the 117-residue chain is Aspartate 1-decarboxylase (117 aa).

S25 (schiff-base intermediate with substrate; via pyruvic acid) is an active-site residue. S25 carries the post-translational modification Pyruvic acid (Ser). Position 57 (T57) interacts with substrate. Y58 functions as the Proton donor in the catalytic mechanism. A substrate-binding site is contributed by 73–75 (GAA).

The protein belongs to the PanD family. Heterooctamer of four alpha and four beta subunits. Requires pyruvate as cofactor. Is synthesized initially as an inactive proenzyme, which is activated by self-cleavage at a specific serine bond to produce a beta-subunit with a hydroxyl group at its C-terminus and an alpha-subunit with a pyruvoyl group at its N-terminus.

Its subcellular location is the cytoplasm. The catalysed reaction is L-aspartate + H(+) = beta-alanine + CO2. It participates in cofactor biosynthesis; (R)-pantothenate biosynthesis; beta-alanine from L-aspartate: step 1/1. Functionally, catalyzes the pyruvoyl-dependent decarboxylation of aspartate to produce beta-alanine. This Thermoanaerobacter pseudethanolicus (strain ATCC 33223 / 39E) (Clostridium thermohydrosulfuricum) protein is Aspartate 1-decarboxylase.